The chain runs to 282 residues: Protease HtpX homolog (282 aa).

Transmembrane regions (helical) follow at residues threonine 6 to glycine 26 and glutamine 28 to serine 48. Histidine 130 serves as a coordination point for Zn(2+). Glutamate 131 is an active-site residue. Residue histidine 134 participates in Zn(2+) binding. 2 helical membrane-spanning segments follow: residues isoleucine 140–alanine 160 and isoleucine 177–isoleucine 197. Glutamate 202 provides a ligand contact to Zn(2+).

This sequence belongs to the peptidase M48B family. Zn(2+) serves as cofactor.

It localises to the cell inner membrane. In Campylobacter hominis (strain ATCC BAA-381 / DSM 21671 / CCUG 45161 / LMG 19568 / NCTC 13146 / CH001A), this protein is Protease HtpX homolog.